A 269-amino-acid chain; its full sequence is JmjC domain-containing protein 8 (269 aa).

An N-terminal signal peptide occupies residues M1 to P24. N135, N145, and N214 each carry an N-linked (GlcNAc...) asparagine glycan. The region spanning D136 to G269 is the JmjC domain.

As to quaternary structure, oligomer. Dimer. Interacts with PKM; regulates angiogenesis and metabolism. In terms of processing, N-glycosylated.

The protein resides in the endoplasmic reticulum lumen. Its subcellular location is the cytoplasm. In terms of biological role, functions as a positive regulator of TNF-induced NF-kappaB signaling. Regulates angiogenesis and cellular metabolism through interaction with PKM. The protein is JmjC domain-containing protein 8 of Mus musculus (Mouse).